Consider the following 707-residue polypeptide: Bone morphogenetic protein 1 (707 aa).

The interval 57 to 90 is disordered; the sequence is SGAATNISRPEKGRRTRKERRRSREKRASTSRPE. N-linked (GlcNAc...) asparagine glycosylation is present at asparagine 62. Basic residues predominate over residues 68–81; it reads KGRRTRKERRRSRE. The 200-residue stretch at 84–283 folds into the Peptidase M12A domain; it reads ASTSRPERVW…AQARKLYKCP (200 aa). N-linked (GlcNAc...) asparagine glycosylation is present at asparagine 105. Intrachain disulfides connect cysteine 126–cysteine 282, cysteine 146–cysteine 168, cysteine 148–cysteine 149, and cysteine 285–cysteine 311. Zn(2+) is bound at residue histidine 176. Glutamate 177 is a catalytic residue. Residues histidine 180 and histidine 186 each contribute to the Zn(2+) site. CUB domains follow at residues 285–397 and 398–509; these read CGET…YEAL and CGGE…NYFK. Residues asparagine 295 and asparagine 326 are each glycosylated (N-linked (GlcNAc...) asparagine). 8 disulfide bridges follow: cysteine 338–cysteine 360, cysteine 398–cysteine 424, cysteine 451–cysteine 473, cysteine 514–cysteine 526, cysteine 522–cysteine 535, cysteine 537–cysteine 550, cysteine 554–cysteine 580, and cysteine 607–cysteine 629. Residues 510-551 form the EGF-like; calcium-binding domain; sequence EVDECSRPNNGGCEQRCVNTLGSYKCACDPGYELGQDKKSCE. The CUB 3 domain occupies 554–666; it reads CGGFLTKLNG…KGFQANFFSE (113 aa). Residue asparagine 562 is glycosylated (N-linked (GlcNAc...) asparagine). The tract at residues 682–707 is disordered; that stretch reads RGQQNQAPKRVRPRMRLRTVKKTRPP. Residues 690 to 707 are compositionally biased toward basic residues; it reads KRVRPRMRLRTVKKTRPP.

Interacts with olfml3/ont1. Zn(2+) is required as a cofactor. Post-translationally, proteolytically activated in the trans-Golgi network by furin-like/paired basic proprotein convertases, cleavage is not required for secretion.

The protein resides in the golgi apparatus. Its subcellular location is the trans-Golgi network. It localises to the secreted. The protein localises to the extracellular space. It is found in the extracellular matrix. In terms of biological role, metalloprotease involved in pattern formation in gastrula and later differentiation of developing organs. Able to cleave chordin (chrd), suggesting that it may act in dorsoventral patterning during early development by regulating the chordin (chrd) activity. In Xenopus laevis (African clawed frog), this protein is Bone morphogenetic protein 1 (bmp1).